Here is a 353-residue protein sequence, read N- to C-terminus: Fe(3+) ions import ATP-binding protein FbpC (353 aa).

Residues Val-9–Met-239 form the ABC transporter domain. Gly-41–Thr-48 is an ATP binding site.

This sequence belongs to the ABC transporter superfamily. Fe(3+) ion importer (TC 3.A.1.10) family. As to quaternary structure, the complex is composed of two ATP-binding proteins (FbpC), two transmembrane proteins (FbpB) and a solute-binding protein (FbpA).

The protein localises to the cell inner membrane. The enzyme catalyses Fe(3+)(out) + ATP + H2O = Fe(3+)(in) + ADP + phosphate + H(+). Functionally, part of the ABC transporter complex FbpABC involved in Fe(3+) ions import. Responsible for energy coupling to the transport system. This Agrobacterium fabrum (strain C58 / ATCC 33970) (Agrobacterium tumefaciens (strain C58)) protein is Fe(3+) ions import ATP-binding protein FbpC.